The primary structure comprises 246 residues: MSQKVATKTAPVPESILKKRATSQKKAVDVAKLGRAQQLRNSRLNSVYFKRAEKYVSEYHKTEREAIRLNRIAKNSGTFYVPPAAKVAFVIRIRGINGVSPKPRKVLKLLRLLQLNNGVFVKLNKASINMLKLVEPYVAYGFPNLKSIKELIYKRGHLKIDGQRIPLTSNDMVEKQLGKFGIICVEDIIHEITTCGKHFKQVNNSLWPFKLNCPRGGFNMKKTPFLQGGDAGNREHLINNLIHRMN.

It belongs to the universal ribosomal protein uL30 family.

Functionally, binds to G-rich structures in 28S rRNA and in mRNAs. Plays a regulatory role in the translation apparatus; inhibits cell-free translation of mRNAs. This Dictyostelium discoideum (Social amoeba) protein is Large ribosomal subunit protein uL30 (rpl7).